Consider the following 692-residue polypeptide: Elongation factor G (692 aa).

The tr-type G domain maps to 8–282; sequence AKTRNIGIMA…AVIAYLPSPL (275 aa). Residues 17–24, 81–85, and 135–138 each bind GTP; these read AHVDAGKT, DTPGH, and NKMD.

The protein belongs to the TRAFAC class translation factor GTPase superfamily. Classic translation factor GTPase family. EF-G/EF-2 subfamily.

The protein localises to the cytoplasm. Its function is as follows. Catalyzes the GTP-dependent ribosomal translocation step during translation elongation. During this step, the ribosome changes from the pre-translocational (PRE) to the post-translocational (POST) state as the newly formed A-site-bound peptidyl-tRNA and P-site-bound deacylated tRNA move to the P and E sites, respectively. Catalyzes the coordinated movement of the two tRNA molecules, the mRNA and conformational changes in the ribosome. This chain is Elongation factor G, found in Streptococcus equi subsp. equi (strain 4047).